The primary structure comprises 275 residues: MRPLQAEIIKALGVQATIDPETEVRRSVDFLKAYLKKNTFLKTYVLGISGGQDSSLAGALTEKAMQEMRAETGDDAYQFIAVRLPYGEQADEADAMAAIDFMHADVVKRVNIKPSVDAMVAAVEADGSKISDFNKGNIKARMRMIAQYAIAGNNAGAVIGTDHAAEAVTGFYTKFGDGGADLTPLYRLDKRQGAALLKVLGAPAHLYEKAPTADLEDNRPALPDEVALGVKYKDIDDYLEGKDVSDQAAETIEKWYQKTAHKRHLPITVFDNFWK.

Residue 47–54 (GISGGQDS) participates in ATP binding. Position 53 (Asp-53) interacts with Mg(2+). Arg-141 provides a ligand contact to deamido-NAD(+). Thr-161 serves as a coordination point for ATP. A Mg(2+)-binding site is contributed by Glu-166. Residues Lys-174 and Asp-181 each coordinate deamido-NAD(+). Residues Lys-190 and Thr-212 each contribute to the ATP site. A deamido-NAD(+)-binding site is contributed by 261–262 (HK).

Belongs to the NAD synthetase family. As to quaternary structure, homodimer.

It carries out the reaction deamido-NAD(+) + NH4(+) + ATP = AMP + diphosphate + NAD(+) + H(+). It participates in cofactor biosynthesis; NAD(+) biosynthesis; NAD(+) from deamido-NAD(+) (ammonia route): step 1/1. Functionally, catalyzes the ATP-dependent amidation of deamido-NAD to form NAD. Uses ammonia as a nitrogen source. This Lacticaseibacillus casei (strain BL23) (Lactobacillus casei) protein is NH(3)-dependent NAD(+) synthetase.